The sequence spans 274 residues: Large ribosomal subunit protein uL2 (274 aa).

The segment at 223–274 (VVMNPVDHPHGGGEGRTSGGRHPVSPWGVPTKGFKTRKNKRTDKYIVRRRTK) is disordered. Basic residues predominate over residues 256-274 (FKTRKNKRTDKYIVRRRTK).

It belongs to the universal ribosomal protein uL2 family. Part of the 50S ribosomal subunit. Forms a bridge to the 30S subunit in the 70S ribosome.

Its function is as follows. One of the primary rRNA binding proteins. Required for association of the 30S and 50S subunits to form the 70S ribosome, for tRNA binding and peptide bond formation. It has been suggested to have peptidyltransferase activity; this is somewhat controversial. Makes several contacts with the 16S rRNA in the 70S ribosome. This Vibrio atlanticus (strain LGP32) (Vibrio splendidus (strain Mel32)) protein is Large ribosomal subunit protein uL2.